The sequence spans 782 residues: MRLVYSLIFLLFIPFSHPNPIPIPTISPETTNAYLRAFLPWWPEKTDFTLRTAPTPEESEAEIVGNLLESSGEKENVTEFATEKEEIDPSTLRVHDLPPSPLDEFAPEGSPKSLVASGARSSDGNFIISFDEMGECPRDCSNDLRDALGIILQDMSHVERYRQICGKYTNAITCVNEDTRCNKEDRDMFETMTSGLNYMCVEQKLAFNATIKCIDDEAGVVQSECDTQCQTKNLFMNWMMKTAFQDTIQQGVNGIVGAATGTNANPLAFLQPVAGAAGGAPGGGWADMLANIGQRPPSPQDAQQGFENFRQFTNDLCRIGDCMLDCIRSKFNTRCEGSAGTLLSEVFVRPIAATQNKLSILRPILGTFMPEQCGYLTNNAELKKHRIDATMDEELKRMYAEKIAKEARDRTAQDEILANLVPLDENGVPLPRALPELKSIESPLDVSVKTLDQLILDMYSNNKTEELNISEKNNVTSTFSEPSEKEDEASTTVISVISPLHTNATDSEILEHISEKSTEESSGSSGEMSGDGSDNEASGEGSGEYDASGSSGDNSGEFNSSGSSGEASEEGESSGSEDQGSGNYKMIESIESSGEFSGSSGEGSGDTASSDTSIDDKSIIRSGEGSAESVSEILQEASGEDAPTLTPTSEESTGYKIDHSGFGESSGSSGESIELRDSGEGSAEYDASGSSGDNSGDFNSSGSSGEASGVGESSGSEDQGSGNYKKIEVIESSGDYEFSGSSNESIEQSKEGSAASIYEILQAASGEDTPTLTLLSEDSTGY.

The N-terminal stretch at 1-18 (MRLVYSLIFLLFIPFSHP) is a signal peptide. N-linked (GlcNAc...) asparagine glycosylation is found at Asn-76, Asn-208, Asn-462, Asn-468, Asn-474, and Asn-503. Residues 513–726 (ISEKSTEESS…EDQGSGNYKK (214 aa)) are disordered. Composition is skewed to low complexity over residues 520–532 (ESSG…SGDG), 548–566 (SGSS…SSGE), 573–612 (SSGS…SSDT), 662–672 (FGESSGSSGES), and 688–722 (SGSS…QGSG). Asn-559 carries an N-linked (GlcNAc...) asparagine glycan. Ser-691 is a glycosylation site (O-linked (Xyl...) (chondroitin sulfate) serine). A glycan (N-linked (GlcNAc...) asparagine) is linked at Asn-699. O-linked (Xyl...) (chondroitin sulfate) serine glycosylation is found at Ser-701, Ser-704, Ser-708, Ser-714, and Ser-721. Asn-743 carries an N-linked (GlcNAc...) asparagine glycan.

The polypeptide is Chondroitin proteoglycan 4 (Caenorhabditis elegans).